A 274-amino-acid polypeptide reads, in one-letter code: Pantothenate synthetase (274 aa).

27 to 34 is a binding site for ATP; sequence MGALHKGH. The active-site Proton donor is the H34. A (R)-pantoate-binding site is contributed by Q58. Q58 serves as a coordination point for beta-alanine. 145–148 serves as a coordination point for ATP; it reads GQKD. (R)-pantoate is bound at residue Q151. 182–185 contributes to the ATP binding site; the sequence is LSSR.

Belongs to the pantothenate synthetase family. As to quaternary structure, homodimer.

The protein resides in the cytoplasm. It carries out the reaction (R)-pantoate + beta-alanine + ATP = (R)-pantothenate + AMP + diphosphate + H(+). It functions in the pathway cofactor biosynthesis; (R)-pantothenate biosynthesis; (R)-pantothenate from (R)-pantoate and beta-alanine: step 1/1. Catalyzes the condensation of pantoate with beta-alanine in an ATP-dependent reaction via a pantoyl-adenylate intermediate. The protein is Pantothenate synthetase of Wolinella succinogenes (strain ATCC 29543 / DSM 1740 / CCUG 13145 / JCM 31913 / LMG 7466 / NCTC 11488 / FDC 602W) (Vibrio succinogenes).